The chain runs to 241 residues: Pyridoxal phosphate phosphatase PHOSPHO2 (241 aa).

Aspartate 8 serves as the catalytic Nucleophile. Residues aspartate 8 and aspartate 10 each contribute to the Mg(2+) site. Catalysis depends on aspartate 10, which acts as the Proton donor. 2 residues coordinate substrate: aspartate 19 and aspartate 99. Position 179 (aspartate 179) interacts with Mg(2+).

This sequence belongs to the HAD-like hydrolase superfamily. PHOSPHO family. Requires Mg(2+) as cofactor.

It catalyses the reaction pyridoxal 5'-phosphate + H2O = pyridoxal + phosphate. Phosphatase that has high activity toward pyridoxal 5'-phosphate (PLP). Also active at much lower level toward pyrophosphate, phosphoethanolamine (PEA), phosphocholine (PCho), phospho-l-tyrosine, fructose-6-phosphate, p-nitrophenyl phosphate, and h-glycerophosphate. In Rattus norvegicus (Rat), this protein is Pyridoxal phosphate phosphatase PHOSPHO2 (Phospho2).